The sequence spans 211 residues: Protein-L-isoaspartate O-methyltransferase (211 aa).

S62 is a catalytic residue.

The protein belongs to the methyltransferase superfamily. L-isoaspartyl/D-aspartyl protein methyltransferase family.

It is found in the cytoplasm. The enzyme catalyses [protein]-L-isoaspartate + S-adenosyl-L-methionine = [protein]-L-isoaspartate alpha-methyl ester + S-adenosyl-L-homocysteine. In terms of biological role, catalyzes the methyl esterification of L-isoaspartyl residues in peptides and proteins that result from spontaneous decomposition of normal L-aspartyl and L-asparaginyl residues. It plays a role in the repair and/or degradation of damaged proteins. The chain is Protein-L-isoaspartate O-methyltransferase from Shewanella oneidensis (strain ATCC 700550 / JCM 31522 / CIP 106686 / LMG 19005 / NCIMB 14063 / MR-1).